Here is a 683-residue protein sequence, read N- to C-terminus: Rhophilin-2-B (683 aa).

The 75-residue stretch at 25–99 (KSIAQTGRSK…LERLNISVEV (75 aa)) folds into the REM-1 domain. In terms of domain architecture, BRO1 spans 110–501 (PLIPLGLKET…TDIFQRLGPL (392 aa)). Residues 515 to 592 (KMCITKEDGD…DSIEIQVISI (78 aa)) enclose the PDZ domain.

The protein belongs to the RHPN family. In terms of assembly, interacts with RhoA.

Its subcellular location is the cytoplasm. It localises to the perinuclear region. In terms of biological role, binds specifically to GTP-Rho. This Xenopus laevis (African clawed frog) protein is Rhophilin-2-B (rhpn2-b).